The primary structure comprises 238 residues: Ribosomal RNA large subunit methyltransferase E (238 aa).

Gly-76, Trp-78, Asp-99, Asp-115, and Asp-139 together coordinate S-adenosyl-L-methionine. The active-site Proton acceptor is the Lys-179.

The protein belongs to the class I-like SAM-binding methyltransferase superfamily. RNA methyltransferase RlmE family.

The protein localises to the cytoplasm. The enzyme catalyses uridine(2552) in 23S rRNA + S-adenosyl-L-methionine = 2'-O-methyluridine(2552) in 23S rRNA + S-adenosyl-L-homocysteine + H(+). Specifically methylates the uridine in position 2552 of 23S rRNA at the 2'-O position of the ribose in the fully assembled 50S ribosomal subunit. The protein is Ribosomal RNA large subunit methyltransferase E of Rhodopseudomonas palustris (strain BisB18).